A 385-amino-acid chain; its full sequence is Putative type I restriction enzyme specificity subunit S.HindORF215P (385 aa).

Belongs to the type-I restriction system S methylase family.

Functionally, a putative specificity subunit for a type I restriction enzyme; the corresponding endonuclease and methylase subunits have multiple frameshifts and are probably not expressed. The sequence is that of Putative type I restriction enzyme specificity subunit S.HindORF215P from Haemophilus influenzae (strain ATCC 51907 / DSM 11121 / KW20 / Rd).